A 194-amino-acid polypeptide reads, in one-letter code: Small ribosomal subunit protein uS11m (194 aa).

The protein belongs to the universal ribosomal protein uS11 family. Component of the mitochondrial small ribosomal subunit (mt-SSU). Mature mammalian 55S mitochondrial ribosomes consist of a small (28S) and a large (39S) subunit. The 28S small subunit contains a 12S ribosomal RNA (12S mt-rRNA) and 30 different proteins. The 39S large subunit contains a 16S rRNA (16S mt-rRNA), a copy of mitochondrial valine transfer RNA (mt-tRNA(Val)), which plays an integral structural role, and 52 different proteins.

Its subcellular location is the mitochondrion. The polypeptide is Small ribosomal subunit protein uS11m (MRPS11) (Homo sapiens (Human)).